Here is a 369-residue protein sequence, read N- to C-terminus: Ferrochelatase (369 aa).

Positions 210 and 291 each coordinate Fe cation.

The protein belongs to the ferrochelatase family.

The protein localises to the cytoplasm. The catalysed reaction is heme b + 2 H(+) = protoporphyrin IX + Fe(2+). Its pathway is porphyrin-containing compound metabolism; protoheme biosynthesis; protoheme from protoporphyrin-IX: step 1/1. In terms of biological role, catalyzes the ferrous insertion into protoporphyrin IX. The chain is Ferrochelatase from Thioalkalivibrio sulfidiphilus (strain HL-EbGR7).